Reading from the N-terminus, the 75-residue chain is Small capsomere-interacting protein (75 aa).

The protein belongs to the herpesviridae small capsomere-interacting protein family. Interacts with the major capsid protein/MCP.

It localises to the virion. The protein localises to the host nucleus. Functionally, participates in the assembly of the infectious particles by decorating the outer surface of the capsid shell and thus forming a layer between the capsid and the tegument. Complexes composed of the capsid protein VP5 and UL48A assemble together in the host cytoplasm and are translocated to the nucleus, where they accumulate and participate in capsid assembly. In terms of biological role, participates in the assembly of the infectious particles by decorating the outer surface of the capsid shell and thus forming a layer between the capsid and the tegument. Complexes composed of the major capsid protein and small capsomere-interacting protein/SCP assemble together in the host cytoplasm and are translocated to the nucleus, where they accumulate and participate in capsid assembly. The sequence is that of Small capsomere-interacting protein from Homo sapiens (Human).